Reading from the N-terminus, the 564-residue chain is Pyruvate decarboxylase (564 aa).

Pyruvate-binding residues include Asp28 and His115. Residues Thr390 and 413 to 415 each bind thiamine diphosphate; that span reads GSI. Mg(2+) is bound at residue Asp444. Thiamine diphosphate is bound by residues 445–446 and 471–476; these read GS and NNGYTI. Residues Asn471 and Gly473 each coordinate Mg(2+). Glu477 is a binding site for pyruvate.

This sequence belongs to the TPP enzyme family. Homotetramer. Mg(2+) is required as a cofactor. Requires thiamine diphosphate as cofactor.

The enzyme catalyses a 2-oxocarboxylate + H(+) = an aldehyde + CO2. It catalyses the reaction pyruvate + H(+) = acetaldehyde + CO2. The chain is Pyruvate decarboxylase (PDC) from Hanseniaspora uvarum (Yeast).